The sequence spans 232 residues: Putative N-acetylmannosamine-6-phosphate 2-epimerase (232 aa).

Belongs to the NanE family.

It catalyses the reaction an N-acyl-D-glucosamine 6-phosphate = an N-acyl-D-mannosamine 6-phosphate. It functions in the pathway amino-sugar metabolism; N-acetylneuraminate degradation; D-fructose 6-phosphate from N-acetylneuraminate: step 3/5. Functionally, converts N-acetylmannosamine-6-phosphate (ManNAc-6-P) to N-acetylglucosamine-6-phosphate (GlcNAc-6-P). The sequence is that of Putative N-acetylmannosamine-6-phosphate 2-epimerase from Synechococcus elongatus (strain ATCC 33912 / PCC 7942 / FACHB-805) (Anacystis nidulans R2).